A 262-amino-acid chain; its full sequence is Small ribosomal subunit protein uS2 (262 aa).

Residues 225–262 form a disordered region; that stretch reads KQGEQLTEEAKPEDKEDEKGQAEEKEVKEENNSANKEE. Over residues 232–262 the composition is skewed to basic and acidic residues; that stretch reads EEAKPEDKEDEKGQAEEKEVKEENNSANKEE.

It belongs to the universal ribosomal protein uS2 family.

This chain is Small ribosomal subunit protein uS2, found in Halothermothrix orenii (strain H 168 / OCM 544 / DSM 9562).